Reading from the N-terminus, the 235-residue chain is Orotidine 5'-phosphate decarboxylase (235 aa).

Substrate contacts are provided by residues Asp-12, Lys-34, Asp-61 to Thr-70, Thr-116, Arg-177, Gln-186, Gly-206, and Arg-207. The active-site Proton donor is Lys-63.

This sequence belongs to the OMP decarboxylase family. Type 1 subfamily. Homodimer.

It carries out the reaction orotidine 5'-phosphate + H(+) = UMP + CO2. It participates in pyrimidine metabolism; UMP biosynthesis via de novo pathway; UMP from orotate: step 2/2. Functionally, catalyzes the decarboxylation of orotidine 5'-monophosphate (OMP) to uridine 5'-monophosphate (UMP). The chain is Orotidine 5'-phosphate decarboxylase from Rhizobium etli (strain ATCC 51251 / DSM 11541 / JCM 21823 / NBRC 15573 / CFN 42).